The primary structure comprises 539 residues: GMP synthase [glutamine-hydrolyzing] (539 aa).

A Glutamine amidotransferase type-1 domain is found at 4–202 (KILILDFGSQ…VLGIAGCKPD (199 aa)). Catalysis depends on cysteine 81, which acts as the Nucleophile. Residues histidine 176 and glutamate 178 contribute to the active site. The GMPS ATP-PPase domain maps to 203 to 395 (WVMRDHIEEA…LGLPPEMVYR (193 aa)). 230–236 (SGGVDSS) is an ATP binding site.

Homodimer.

It carries out the reaction XMP + L-glutamine + ATP + H2O = GMP + L-glutamate + AMP + diphosphate + 2 H(+). Its pathway is purine metabolism; GMP biosynthesis; GMP from XMP (L-Gln route): step 1/1. Its function is as follows. Catalyzes the synthesis of GMP from XMP. In Cupriavidus necator (strain ATCC 17699 / DSM 428 / KCTC 22496 / NCIMB 10442 / H16 / Stanier 337) (Ralstonia eutropha), this protein is GMP synthase [glutamine-hydrolyzing].